A 443-amino-acid chain; its full sequence is ATP-dependent protease ATPase subunit HslU (443 aa).

ATP-binding positions include isoleucine 20, 62–67 (GVGKTE), aspartate 255, glutamate 321, and arginine 393.

Belongs to the ClpX chaperone family. HslU subfamily. A double ring-shaped homohexamer of HslV is capped on each side by a ring-shaped HslU homohexamer. The assembly of the HslU/HslV complex is dependent on binding of ATP.

It localises to the cytoplasm. Its function is as follows. ATPase subunit of a proteasome-like degradation complex; this subunit has chaperone activity. The binding of ATP and its subsequent hydrolysis by HslU are essential for unfolding of protein substrates subsequently hydrolyzed by HslV. HslU recognizes the N-terminal part of its protein substrates and unfolds these before they are guided to HslV for hydrolysis. This Helicobacter pylori (strain P12) protein is ATP-dependent protease ATPase subunit HslU.